Consider the following 146-residue polypeptide: Leptin (146 aa).

Residues Cys-96 and Cys-146 are joined by a disulfide bond.

It belongs to the leptin family.

It is found in the secreted. Its function is as follows. Key player in the regulation of energy balance and body weight control. Once released into the circulation, has central and peripheral effects by binding LEPR, found in many tissues, which results in the activation of several major signaling pathways. In the hypothalamus, acts as an appetite-regulating factor that induces a decrease in food intake and an increase in energy consumption by inducing anorexinogenic factors and suppressing orexigenic neuropeptides, also regulates bone mass and secretion of hypothalamo-pituitary-adrenal hormones. In the periphery, increases basal metabolism, influences reproductive function, regulates pancreatic beta-cell function and insulin secretion, is pro-angiogenic for endothelial cell and affects innate and adaptive immunity. In the arcuate nucleus of the hypothalamus, activates by depolarization POMC neurons inducing FOS and SOCS3 expression to release anorexigenic peptides and inhibits by hyperpolarization NPY neurons inducing SOCS3 with a consequent reduction on release of orexigenic peptides. In addition to its known satiety inducing effect, has a modulatory role in nutrient absorption. In the intestine, reduces glucose absorption by enterocytes by activating PKC and leading to a sequential activation of p38, PI3K and ERK signaling pathways which exerts an inhibitory effect on glucose absorption. Acts as a growth factor on certain tissues, through the activation of different signaling pathways increases expression of genes involved in cell cycle regulation such as CCND1, via JAK2-STAT3 pathway, or VEGFA, via MAPK1/3 and PI3K-AKT1 pathways. May also play an apoptotic role via JAK2-STAT3 pathway and up-regulation of BIRC5 expression. Pro-angiogenic, has mitogenic activity on vascular endothelial cells and plays a role in matrix remodeling by regulating the expression of matrix metalloproteinases (MMPs) and tissue inhibitors of metalloproteinases (TIMPs). In innate immunity, modulates the activity and function of neutrophils by increasing chemotaxis and the secretion of oxygen radicals. Increases phagocytosis by macrophages and enhances secretion of pro-inflammatory mediators. Increases cytotoxic ability of NK cells. Plays a pro-inflammatory role, in synergy with IL1B, by inducing NOS2 which promotes the production of IL6, IL8 and Prostaglandin E2, through a signaling pathway that involves JAK2, PI3K, MAP2K1/MEK1 and MAPK14/p38. In adaptive immunity, promotes the switch of memory T-cells towards T helper-1 cell immune responses. Increases CD4(+)CD25(-) T-cell proliferation and reduces autophagy during TCR (T-cell receptor) stimulation, through MTOR signaling pathway activation and BCL2 up-regulation. This Gorilla gorilla gorilla (Western lowland gorilla) protein is Leptin (LEP).